A 776-amino-acid chain; its full sequence is Serine/threonine-protein kinase SIK1 (776 aa).

The 252-residue stretch at 27-278 folds into the Protein kinase domain; it reads YDVERTLGKG…IAQIRQHRWM (252 aa). Residues 33-41 and Lys56 each bind ATP; that span reads LGKGNFAVV. Asp149 serves as the catalytic Proton acceptor. Thr182 is subject to Phosphothreonine; by LKB1 and GSK3-beta. Ser186 bears the Phosphoserine; by autocatalysis mark. In terms of domain architecture, UBA spans 303-343; it reads DYNEQVLGIMQALGIDRQRTVESLQNSSYNHFAAIYYLLLE. Residue Thr322 is modified to Phosphothreonine; by CaMK1. 2 disordered regions span residues 350–371 and 449–472; these read STQPSSRATPAPARQPQLRNSD and EARQGPSLEEEQEVQEPLPGSTGR. Residue Ser577 is modified to Phosphoserine; by PKA. The RK-rich region stretch occupies residues 586–612; that stretch reads KAFRQQLRKNARTKGFLGLNKIKGLAR. The disordered stretch occupies residues 621–643; sequence GSRGGMSTFHTPAPSSGLQGCTA. A compositionally biased stretch (polar residues) spans 628–643; the sequence is TFHTPAPSSGLQGCTA.

The protein belongs to the protein kinase superfamily. CAMK Ser/Thr protein kinase family. AMPK subfamily. Interacts (when phosphorylated on Thr-182 and Ser-186) with YWHAZ. Interacts with ATP1A1. Mg(2+) is required as a cofactor. In terms of processing, phosphorylated at Thr-182 by STK11/LKB1 in complex with STE20-related adapter-alpha (STRADA) pseudo kinase and CAB39, leading to its activation. Phosphorylation at Thr-182 promotes autophosphorylation at Ser-186, which is required for sustained activity. Autophosphorylation at Ser-186 is maintained by sequential phosphorylation at Thr-182 by GSK3-beta. GSK3-beta cannot initiate phosphorylation at Thr-182, it can only maintain it. Phosphorylation at Ser-577 by PKA promotes translocation to the cytoplasm. Phosphorylation at Thr-322 by CaMK1 following intracellular sodium concentration leads to activation.

The protein localises to the cytoplasm. It localises to the nucleus. The enzyme catalyses L-seryl-[protein] + ATP = O-phospho-L-seryl-[protein] + ADP + H(+). The catalysed reaction is L-threonyl-[protein] + ATP = O-phospho-L-threonyl-[protein] + ADP + H(+). Its activity is regulated as follows. Activated by phosphorylation on Thr-182. Also activated by phosphorylation on Thr-322 in response to increases in intracellular sodium in parallel with elevations in intracellular calcium through the reversible sodium/calcium exchanger. In terms of biological role, serine/threonine-protein kinase involved in various processes such as cell cycle regulation, gluconeogenesis and lipogenesis regulation, muscle growth and differentiation and tumor suppression. Phosphorylates HDAC4, HDAC5, PPME1, SREBF1, CRTC1/TORC1 and CRTC2/TORC2. Acts as a tumor suppressor and plays a key role in p53/TP53-dependent anoikis, a type of apoptosis triggered by cell detachment: required for phosphorylation of p53/TP53 in response to loss of adhesion and is able to suppress metastasis. Part of a sodium-sensing signaling network, probably by mediating phosphorylation of PPME1: following increases in intracellular sodium, SIK1 is activated by CaMK1 and phosphorylates PPME1 subunit of protein phosphatase 2A (PP2A), leading to dephosphorylation of sodium/potassium-transporting ATPase ATP1A1 and subsequent increase activity of ATP1A1. Acts as a regulator of muscle cells by phosphorylating and inhibiting class II histone deacetylases HDAC4 and HDAC5, leading to promote expression of MEF2 target genes in myocytes. Also required during cardiomyogenesis by regulating the exit of cardiomyoblasts from the cell cycle via down-regulation of CDKN1C/p57Kip2. Acts as a regulator of hepatic gluconeogenesis by phosphorylating and repressing the CREB-specific coactivators CRTC1/TORC1 and CRTC2/TORC2, leading to inhibit CREB activity. Also regulates hepatic lipogenesis by phosphorylating and inhibiting SREBF1. In concert with CRTC1/TORC1, regulates the light-induced entrainment of the circadian clock by attenuating PER1 induction; represses CREB-mediated transcription of PER1 by phosphorylating and deactivating CRTC1/TORC1. This is Serine/threonine-protein kinase SIK1 (Sik1) from Rattus norvegicus (Rat).